The primary structure comprises 307 residues: Zinc transporter ZIP9 (307 aa).

A helical transmembrane segment spans residues 4-24 (FISISLLSLAMLVGCYVAGII). N-linked (GlcNAc...) asparagine glycosylation occurs at asparagine 29. A run of 5 helical transmembrane segments spans residues 35–55 (LKLV…AVIV), 106–126 (AYIG…DQIG), 146–166 (ITTT…LGAA), 176–196 (LIVF…LVSF), and 210–230 (HLLV…LGLS). An N-linked (GlcNAc...) asparagine glycan is attached at asparagine 241. The next 2 membrane-spanning stretches (helical) occupy residues 244–264 (GVAM…HVLP) and 286–306 (LEVA…VGHQ).

It belongs to the ZIP transporter (TC 2.A.5) family. In terms of tissue distribution, highly expressed in pancreas, testis, and pituitary and moderately in the kidney, liver, uterus, heart, prostate, and brain, whereas expression is lower in the ovary and colon.

Its subcellular location is the golgi apparatus. The protein resides in the trans-Golgi network membrane. The protein localises to the cell membrane. It is found in the cytoplasm. It localises to the perinuclear region. Its subcellular location is the mitochondrion. The protein resides in the nucleus. The catalysed reaction is Zn(2+)(in) = Zn(2+)(out). Functionally, transports zinc ions across cell and organelle membranes into the cytoplasm and regulates intracellular zinc homeostasis. Participates in the zinc ions efflux out of the secretory compartments. Regulates intracellular zinc level, resulting in the enhancement of AKT1 and MAPK3/MAPK1 (Erk1/2) phosphorylation in response to the BCR activation. Also functions as a membrane androgen receptor that mediates, through a G protein, the non-classical androgen signaling pathway, characterized by the activation of MAPK3/MAPK1 (Erk1/2) and transcription factors CREB1 or ATF1. This pathway contributes to CLDN1 and CLDN5 expression and tight junction formation between adjacent Sertoli cells. Mediates androgen-induced vascular endothelial cell proliferation through activation of an inhibitory G protein leading to the AKT1 and MAPK3/MAPK1 (Erk1/2) activation which in turn modulate inhibition (phosphorylation) of GSK3B and CCND1 transcription. Moreover, has dual functions as a membrane-bound androgen receptor and as an androgen-dependent zinc transporter both of which are mediated through an inhibitory G protein (Gi) that mediates both MAP kinase and zinc signaling leading to the androgen-dependent apoptotic process. The polypeptide is Zinc transporter ZIP9 (Homo sapiens (Human)).